The sequence spans 287 residues: Mitochondrial dicarboxylate carrier (287 aa).

3 Solcar repeats span residues 7–87 (SRWY…MRDY), 100–187 (NKVL…AKQL), and 196–279 (DNIF…LRKH). The next 3 helical transmembrane spans lie at 9–29 (WYFG…LDLL), 62–81 (GLSA…FAIY), and 102–122 (VLLG…ADLV). Lysine 158 bears the N6-acetyllysine mark. 3 helical membrane-spanning segments follow: residues 162–181 (GATM…LSCY), 202–222 (FVSS…LDVL), and 254–274 (GLFP…MFLE).

The protein belongs to the mitochondrial carrier (TC 2.A.29) family. As to expression, expressed at very high levels in white adipose tissue. And at low levels in brown adipose tissue, kidney and liver.

Its subcellular location is the mitochondrion inner membrane. The enzyme catalyses (S)-malate(in) + phosphate(out) = (S)-malate(out) + phosphate(in). The catalysed reaction is malonate(out) + (S)-malate(in) = malonate(in) + (S)-malate(out). It carries out the reaction (S)-malate(in) + succinate(out) = (S)-malate(out) + succinate(in). It catalyses the reaction (S)-malate(in) + sulfate(out) = (S)-malate(out) + sulfate(in). The enzyme catalyses malonate(out) + phosphate(in) = malonate(in) + phosphate(out). The catalysed reaction is succinate(out) + phosphate(in) = succinate(in) + phosphate(out). It carries out the reaction sulfate(out) + phosphate(in) = sulfate(in) + phosphate(out). It catalyses the reaction malonate(out) + succinate(in) = malonate(in) + succinate(out). With respect to regulation, regulated by circadian protein CLOCK (Circadian Locomotor Output Cycles Kaput). In terms of biological role, catalyzes the electroneutral exchange or flux of physiologically important metabolites such as dicarboxylates (malonate, malate, succinate), inorganic sulfur-containing anions, and phosphate, across mitochondrial inner membrane. Plays an important role in gluconeogenesis, fatty acid metabolism, urea synthesis, and sulfur metabolism, particularly in liver, by supplying the substrates for the different metabolic processes. Regulates fatty acid release from adipocytes, and contributes to systemic insulin sensitivity. In Mus musculus (Mouse), this protein is Mitochondrial dicarboxylate carrier.